Reading from the N-terminus, the 122-residue chain is Putative protein adenylyltransferase MJ1547 (122 aa).

Residues 11–25 (GSYAKNEYTKRSDID) carry the GSX(10)DXD motif motif. The Mg(2+) site is built by aspartate 23, aspartate 25, and aspartate 48.

Belongs to the MntA antitoxin family. Probably forms a complex with cognate toxin MJ1548. Mg(2+) serves as cofactor.

It carries out the reaction L-tyrosyl-[protein] + ATP = O-(5'-adenylyl)-L-tyrosyl-[protein] + diphosphate. The catalysed reaction is O-(5'-adenylyl)-L-tyrosyl-[protein] + ATP = O-[5'-(adenylyl-(5'-&gt;3')-adenylyl)]-L-tyrosyl-[protein] + diphosphate. Functionally, probable antitoxin component of a putative type VII toxin-antitoxin (TA) system. Neutralizes cognate toxic MJ1548 by di-AMPylation. This is Putative protein adenylyltransferase MJ1547 from Methanocaldococcus jannaschii (strain ATCC 43067 / DSM 2661 / JAL-1 / JCM 10045 / NBRC 100440) (Methanococcus jannaschii).